The sequence spans 115 residues: Large ribosomal subunit protein bL20 (115 aa).

This sequence belongs to the bacterial ribosomal protein bL20 family.

Functionally, binds directly to 23S ribosomal RNA and is necessary for the in vitro assembly process of the 50S ribosomal subunit. It is not involved in the protein synthesizing functions of that subunit. This is Large ribosomal subunit protein bL20 from Myxococcus xanthus (strain DK1622).